The sequence spans 631 residues: ATP-dependent RNA helicase mrh4, mitochondrial (631 aa).

The N-terminal 45 residues, 1 to 45 (MNRLGRLPLPLPPSVCLFCQSRATTPLPPSLQATRSMATARLRRR), are a transit peptide targeting the mitochondrion. The disordered stretch occupies residues 68–111 (KERFGPFAGMNQTEARIRDKPRTRSRAAQKRSGEPEEDSQKESP). Over residues 98–108 (RSGEPEEDSQK) the composition is skewed to basic and acidic residues. The Q motif motif lies at 141–174 (TSFDQFQLLPVVRNSISSQALPGLVDVTPTPIQR). The segment covering 180–193 (LLEEPKTEKKPTKA) has biased composition (basic and acidic residues). The disordered stretch occupies residues 180 to 199 (LLEEPKTEKKPTKADDDEPQ). The 213-residue stretch at 194–406 (DDDEPQYDQY…RKRYPDIKRL (213 aa)) folds into the Helicase ATP-binding domain. 207 to 214 (AETGSGKT) contributes to the ATP binding site. Residues 229-249 (EARDKELEKKEQEEKAREREE) form a disordered region. Residues 353–356 (DEAD) carry the DEAD box motif. The Helicase C-terminal domain occupies 455–631 (GPYASYVAPK…EGMFRGQALI (177 aa)).

The protein belongs to the DEAD box helicase family. MRH4 subfamily.

Its subcellular location is the mitochondrion. The enzyme catalyses ATP + H2O = ADP + phosphate + H(+). ATP-binding RNA helicase involved in mitochondrial RNA metabolism. Required for maintenance of mitochondrial DNA. The chain is ATP-dependent RNA helicase mrh4, mitochondrial (mrh4) from Neosartorya fischeri (strain ATCC 1020 / DSM 3700 / CBS 544.65 / FGSC A1164 / JCM 1740 / NRRL 181 / WB 181) (Aspergillus fischerianus).